Consider the following 460-residue polypeptide: NADH-ubiquinone oxidoreductase chain 4 (460 aa).

The next 13 helical transmembrane spans lie at 22–42, 61–81, 94–113, 117–139, 148–168, 195–217, 225–245, 258–278, 285–304, 308–330, 351–371, 394–414, and 436–456; these read WLWP…ITWL, PLST…LLAS, RMYI…AFGA, IMFY…RWGN, TYFL…LLML, IWWA…HLWL, PVAG…YGMM, MVYP…SICL, SLIA…GILI, WGFT…LFCL, IALP…LALP, LILT…MFLM, and LLMA…ALLW.

This sequence belongs to the complex I subunit 4 family.

It localises to the mitochondrion membrane. It carries out the reaction a ubiquinone + NADH + 5 H(+)(in) = a ubiquinol + NAD(+) + 4 H(+)(out). Its function is as follows. Core subunit of the mitochondrial membrane respiratory chain NADH dehydrogenase (Complex I) that is believed to belong to the minimal assembly required for catalysis. Complex I functions in the transfer of electrons from NADH to the respiratory chain. The immediate electron acceptor for the enzyme is believed to be ubiquinone. The chain is NADH-ubiquinone oxidoreductase chain 4 (MT-ND4) from Gadus morhua (Atlantic cod).